A 2892-amino-acid polypeptide reads, in one-letter code: E3 ubiquitin-protein ligase lubel (2892 aa).

Disordered stretches follow at residues 23–55 (DRIG…KSTP), 125–252 (KQHM…QLEK), 395–423 (SQQH…QFGS), 483–631 (PSAA…ESEG), 644–672 (QKLQ…ENTQ), 685–737 (AHEE…PDHE), 757–865 (CCKT…DNSL), and 949–975 (DRFT…QQES). Positions 40–52 (GLPKAPALPPKAK) are enriched in low complexity. The segment covering 189–198 (GWRGSLGGGA) has biased composition (gly residues). A compositionally biased stretch (polar residues) spans 206–215 (ATSSANQMNN). 2 stretches are compositionally biased toward low complexity: residues 402-412 (AQHPHQALPQH) and 483-503 (PSAA…TPSR). Residues 516 to 528 (VDDELTDDEDSDQ) show a composition bias toward acidic residues. Residues 535–546 (VSNRSGMTSASR) show a composition bias toward polar residues. The segment covering 547–560 (SQHHQNHIQPRQRR) has biased composition (basic residues). A compositionally biased stretch (polar residues) spans 606–623 (GTLTRNKTATDSARTSRI). The span at 647 to 670 (QEADQHKSSKKAEPKRKPEMKDEN) shows a compositional bias: basic and acidic residues. Positions 801–813 (KPTTKSQQPSQKS) are enriched in polar residues. 2 stretches are compositionally biased toward low complexity: residues 818–837 (SKTT…AVNS) and 846–856 (KTPSKSTLKTS). The 146-residue stretch at 1042–1187 (MHIILKELEL…LMRIWGSPNG (146 aa)) folds into the UBA-like 1 domain. 7 disordered regions span residues 1214 to 1252 (LQPP…SPYQ), 1477 to 1520 (LPTA…KLET), 1557 to 1653 (AEVQ…KILS), 1717 to 2019 (STTI…NLSE), 2032 to 2082 (RDEI…EGNT), 2191 to 2316 (SAPP…PLRS), and 2411 to 2431 (DYET…EPQK). Polar residues predominate over residues 1241–1252 (VKSTYATPSPYQ). Residues 1510 to 1519 (EELRQQEKLE) are compositionally biased toward basic and acidic residues. A compositionally biased stretch (polar residues) spans 1560 to 1571 (QVQSDDQPSTSR). Residues 1576 to 1587 (RAKRSQQSRKGR) are compositionally biased toward basic residues. Positions 1595 to 1607 (PTNRTKLPNNIDQ) are enriched in polar residues. Residues 1608 to 1627 (KVNESKTAAKETEAVKDKDL) show a composition bias toward basic and acidic residues. Composition is skewed to polar residues over residues 1630-1653 (AASN…KILS), 1717-1726 (STTISEQSEG), and 1764-1779 (KSPT…TSHI). The span at 1822–1834 (LSSSSLRSESRSS) shows a compositional bias: low complexity. Positions 1859–1881 (TVSSPKSEQLSDNQEVNLVSQET) are enriched in polar residues. Residues 1918–1927 (DSDEVFEDAP) show a composition bias toward acidic residues. Basic and acidic residues predominate over residues 1953 to 1963 (DGQRAETKSPE). Acidic residues-rich tracts occupy residues 1964-1975 (DEVVILLDEESQ) and 2036-2079 (SMDE…DGEE). Composition is skewed to low complexity over residues 2214–2230 (PSEV…ALPI) and 2269–2291 (SGTA…TVSK). A compositionally biased stretch (polar residues) spans 2297-2308 (NEPTNKSNSTPL). A compositionally biased stretch (acidic residues) spans 2411 to 2425 (DYETSATEEEQEEPN). The UBA-like 2 domain maps to 2457–2513 (DPAILARKYVDQELVTNIAEAQIAATLVSMKFSEDVALWAARECSDLDQAIAMLQQE). The segment at 2510–2748 (LQQECELCMN…LGLHAHHPRN (239 aa)) is TRIAD supradomain. Zn(2+)-binding residues include Cys-2514, Cys-2517, Cys-2537, Cys-2540, Cys-2618, Cys-2621, Cys-2636, Cys-2639, Cys-2644, Cys-2647, His-2655, Cys-2660, Cys-2690, and Cys-2693. The segment at 2514 to 2564 (CELCMNSYPMNQMVSMLKCLHKCCKQCAKSYFTVQITDRSINDCSCPFCKL) adopts an RING-type 1 zinc-finger fold. The necessary for linear polyubiquitination and sufficent for inducing DptA in the intestine stretch occupies residues 2514-2892 (CELCMNSYPM…IKKHIPLKSA (379 aa)). Residues 2601-2660 (QRKLRDRSLLQDPNFKWCIQCSSGFFARPKQKRLICPDCGSVTCAQCRKPWERQHEGSSC) form an IBR-type zinc finger. The segment at 2690 to 2720 (CPKCKFRYSLARGGCMHFTCTQCKFEFCYGC) adopts an RING-type 2; atypical zinc-finger fold. Residue Cys-2704 is part of the active site. The Zn(2+) site is built by Cys-2709 and Cys-2712.

The protein belongs to the RBR family.

It carries out the reaction [E2 ubiquitin-conjugating enzyme]-S-ubiquitinyl-L-cysteine + [acceptor protein]-L-lysine = [E2 ubiquitin-conjugating enzyme]-L-cysteine + [acceptor protein]-N(6)-ubiquitinyl-L-lysine.. Its function is as follows. E3 ubiquitin-protein ligase which conjugates linear 'Met-1'- and 'Lys-63'-linked polyubiquitin chains to substrates and plays a crucial role in the NF-kappa-B intestinal inflammatory response to oral infection and in the heat stress response. Preferentially interacts with 'Lys-63'-linked, and to a lesser extent 'Lys-48'-linked, polyubiquitin chains. Upon oral infection with a Gram-negative bacterium E.carotovora subsp. carotovora 15, functions with the E2 ubiquitin-conjugating enzyme Ubc10 to mediate the conjugation of 'Lys-63'- and linear 'Met-1'-linked polyubiquitin chains to the substrate key which is essential for activation of the NF-kappa-B signaling cascade in the adult intestinal epithelium. It is not required for systemic immune response to septic infection with either E.carotovora subsp. carotovora 15 or Gram-positive M.luteus bacteria. Function in controlling linear ubiquitination is also essential for regulating the heat stress response in adults. This function may require the E2 ubiquitin-conjugating enzymes Ubc10 or eff. The sequence is that of E3 ubiquitin-protein ligase lubel from Drosophila melanogaster (Fruit fly).